A 209-amino-acid chain; its full sequence is Ribosome maturation factor RimM (209 aa).

Residues 1–28 (MARRPQRPAPSGRAGAGRGAAGAAPPGP) form a disordered region. The 75-residue stretch at 123-197 (EDEFFTADLV…RVTIAPPEDL (75 aa)) folds into the PRC barrel domain.

It belongs to the RimM family. In terms of assembly, binds ribosomal protein uS19.

It localises to the cytoplasm. In terms of biological role, an accessory protein needed during the final step in the assembly of 30S ribosomal subunit, possibly for assembly of the head region. Essential for efficient processing of 16S rRNA. May be needed both before and after RbfA during the maturation of 16S rRNA. It has affinity for free ribosomal 30S subunits but not for 70S ribosomes. This Methylobacterium sp. (strain 4-46) protein is Ribosome maturation factor RimM.